Here is a 141-residue protein sequence, read N- to C-terminus: Protein E6 (141 aa).

2 zinc fingers span residues 27–64 (CRFC…CSSC) and 101–137 (CKFC…CRHC).

The protein belongs to the papillomaviridae E6 protein family. In terms of assembly, forms homodimers. Interacts with ubiquitin-protein ligase UBE3A/E6-AP; this interaction stimulates UBE3A ubiquitin activity. Interacts with host BAK1.

It localises to the host cytoplasm. It is found in the host nucleus. Functionally, plays a major role in the induction and maintenance of cellular transformation. E6 associates with host UBE3A/E6-AP ubiquitin-protein ligase and modulates its activity. Protects host keratinocytes from apoptosis by mediating the degradation of host BAK1. May also inhibit host immune response. This is Protein E6 from Human papillomavirus 15.